Reading from the N-terminus, the 494-residue chain is Autocrine proliferation repressor protein A (494 aa).

An N-terminal signal peptide occupies residues 1-18 (MSKLLILLLLSLVASIFS). N37, N153, and N302 each carry an N-linked (GlcNAc...) asparagine glycan.

The protein belongs to the pqaA family. As to quaternary structure, interacts with cfaD.

It localises to the secreted. Functionally, inhibitor that slows proliferation of secreting cells (also known as chalone). May function by binding to cell surface receptors. Requires cfaD for activity. Overexpression slows proliferation. The protein is Autocrine proliferation repressor protein A (aprA) of Dictyostelium discoideum (Social amoeba).